The chain runs to 397 residues: Tryptophan synthase beta chain (397 aa).

At lysine 87 the chain carries N6-(pyridoxal phosphate)lysine.

This sequence belongs to the TrpB family. Tetramer of two alpha and two beta chains. Pyridoxal 5'-phosphate is required as a cofactor.

It carries out the reaction (1S,2R)-1-C-(indol-3-yl)glycerol 3-phosphate + L-serine = D-glyceraldehyde 3-phosphate + L-tryptophan + H2O. The protein operates within amino-acid biosynthesis; L-tryptophan biosynthesis; L-tryptophan from chorismate: step 5/5. The beta subunit is responsible for the synthesis of L-tryptophan from indole and L-serine. The protein is Tryptophan synthase beta chain of Klebsiella pneumoniae (strain 342).